Here is a 681-residue protein sequence, read N- to C-terminus: DNA ligase (681 aa).

NAD(+) contacts are provided by residues 45–49 (DFDFD), 94–95 (SL), and Glu-120. Lys-122 serves as the catalytic N6-AMP-lysine intermediate. NAD(+)-binding residues include Arg-143, Glu-177, Lys-289, and Lys-313. The Zn(2+) site is built by Cys-403, Cys-406, Cys-421, and Cys-426. The BRCT domain maps to 593-681 (ADQQPFAGQS…SLKIDFKNLI (89 aa)).

It belongs to the NAD-dependent DNA ligase family. LigA subfamily. Mg(2+) serves as cofactor. The cofactor is Mn(2+).

It carries out the reaction NAD(+) + (deoxyribonucleotide)n-3'-hydroxyl + 5'-phospho-(deoxyribonucleotide)m = (deoxyribonucleotide)n+m + AMP + beta-nicotinamide D-nucleotide.. Functionally, DNA ligase that catalyzes the formation of phosphodiester linkages between 5'-phosphoryl and 3'-hydroxyl groups in double-stranded DNA using NAD as a coenzyme and as the energy source for the reaction. It is essential for DNA replication and repair of damaged DNA. The protein is DNA ligase of Leptospira interrogans serogroup Icterohaemorrhagiae serovar copenhageni (strain Fiocruz L1-130).